Consider the following 94-residue polypeptide: Pyrimidine/purine nucleoside phosphorylase (94 aa).

It belongs to the nucleoside phosphorylase PpnP family.

It catalyses the reaction a purine D-ribonucleoside + phosphate = a purine nucleobase + alpha-D-ribose 1-phosphate. The catalysed reaction is adenosine + phosphate = alpha-D-ribose 1-phosphate + adenine. The enzyme catalyses cytidine + phosphate = cytosine + alpha-D-ribose 1-phosphate. It carries out the reaction guanosine + phosphate = alpha-D-ribose 1-phosphate + guanine. It catalyses the reaction inosine + phosphate = alpha-D-ribose 1-phosphate + hypoxanthine. The catalysed reaction is thymidine + phosphate = 2-deoxy-alpha-D-ribose 1-phosphate + thymine. The enzyme catalyses uridine + phosphate = alpha-D-ribose 1-phosphate + uracil. It carries out the reaction xanthosine + phosphate = alpha-D-ribose 1-phosphate + xanthine. In terms of biological role, catalyzes the phosphorolysis of diverse nucleosides, yielding D-ribose 1-phosphate and the respective free bases. Can use uridine, adenosine, guanosine, cytidine, thymidine, inosine and xanthosine as substrates. Also catalyzes the reverse reactions. The polypeptide is Pyrimidine/purine nucleoside phosphorylase (Citrobacter koseri (strain ATCC BAA-895 / CDC 4225-83 / SGSC4696)).